The primary structure comprises 389 residues: MSFQVSVAVNDGPFQKKSVTPNTTIGDLNNDAILIWKDTAIVYDISDESKNFGPTVTLEQLGVTQISMVYIYTTAFPCPSGDLRSIVPAQVRLISQFASAASSIFNGQSSSSAQSAQRTRRVEQDDEGEKSMFSRKLLDSPATFKALSENMFFRLKNEPHKLGYGLPELVERFLAKKDMTYKEFEQMFRSYVEEEVHKEEIIKNNPNSAEAKMFLEAKRNKELIDEQYLHSMTHHPEDMIAVTMLYINLTINGVPVKAFIDSGAQKSIMSMACAERCGLNGLIDRRFQSMARGVGGTEKIEGKIHLCDVKVEDAHFSCPFEVMARREMDLLIGLNVLRKHGCCINLKTSRLEFGNGTTTPFLQSNEIDSHLKEIMALPEEEMQFEDGST.

Positions 109–132 are disordered; it reads SSSSAQSAQRTRRVEQDDEGEKSM. The active site involves Asp261.

This sequence belongs to the DDI1 family. In terms of tissue distribution, expressed in most tissues.

The protein localises to the cytoplasm. It is found in the nucleus. In terms of biological role, aspartic protease. Required for the cleavage and activation of transcription factors such as isoform a of the transcription factor skn-1, which in turn regulates the expression of proteasomal subunits such as rpt-3. Plays a key role in the degradation of the potassium channel slo-1, perhaps acting directly, in cleaving slo-1 upstream of the ER-associated degradation pathway (ERAD), and also indirectly, via activation of the transcription factor skn-1, which mediates proteasomal homeostasis. In Caenorhabditis elegans, this protein is Protein DDI1 homolog 1.